Consider the following 91-residue polypeptide: Cytochrome b-c1 complex subunit 6, mitochondrial (91 aa).

The N-terminal 13 residues, 1-13 (MGLEDEQKMLTES), are a transit peptide targeting the mitochondrion. The segment at 1–30 (MGLEDEQKMLTESGDPEEEEEEEEELVDPL) is disordered. Residues 14–27 (GDPEEEEEEEEELV) are compositionally biased toward acidic residues. 2 disulfides stabilise this stretch: cysteine 37–cysteine 81 and cysteine 53–cysteine 67. Residue lysine 42 is modified to N6-acetyllysine. N6-acetyllysine is present on lysine 85.

It belongs to the UQCRH/QCR6 family. In terms of assembly, component of the ubiquinol-cytochrome c oxidoreductase (cytochrome b-c1 complex, complex III, CIII), a multisubunit enzyme composed of 11 subunits. The complex is composed of 3 respiratory subunits cytochrome b, cytochrome c1 and Rieske protein UQCRFS1, 2 core protein subunits UQCRC1/QCR1 and UQCRC2/QCR2, and 6 low-molecular weight protein subunits UQCRH/QCR6, UQCRB/QCR7, UQCRQ/QCR8, UQCR10/QCR9, UQCR11/QCR10 and subunit 9, the cleavage product of Rieske protein UQCRFS1. The complex exists as an obligatory dimer and forms supercomplexes (SCs) in the inner mitochondrial membrane with NADH-ubiquinone oxidoreductase (complex I, CI) and cytochrome c oxidase (complex IV, CIV), resulting in different assemblies (supercomplex SCI(1)III(2)IV(1) and megacomplex MCI(2)III(2)IV(2)).

It localises to the mitochondrion inner membrane. In terms of biological role, component of the ubiquinol-cytochrome c oxidoreductase, a multisubunit transmembrane complex that is part of the mitochondrial electron transport chain which drives oxidative phosphorylation. The respiratory chain contains 3 multisubunit complexes succinate dehydrogenase (complex II, CII), ubiquinol-cytochrome c oxidoreductase (cytochrome b-c1 complex, complex III, CIII) and cytochrome c oxidase (complex IV, CIV), that cooperate to transfer electrons derived from NADH and succinate to molecular oxygen, creating an electrochemical gradient over the inner membrane that drives transmembrane transport and the ATP synthase. The cytochrome b-c1 complex catalyzes electron transfer from ubiquinol to cytochrome c, linking this redox reaction to translocation of protons across the mitochondrial inner membrane, with protons being carried across the membrane as hydrogens on the quinol. In the process called Q cycle, 2 protons are consumed from the matrix, 4 protons are released into the intermembrane space and 2 electrons are passed to cytochrome c. This Homo sapiens (Human) protein is Cytochrome b-c1 complex subunit 6, mitochondrial (UQCRH).